Reading from the N-terminus, the 273-residue chain is MSKLQDVIVQEMKVKKRIDSAEEIAELKQFIKSYVQSHSFIKSLVLGISGGQDSTLVGKLVQMSVNELREEGIDCTFIAVKLPYGVQKDADEVEQALQFIEPDEIVTVNIKPAVDQSVQSLKEAGIVLTDFQKGNEKARERMKVQFSIASNRQGIVVGTDHSAENITGFYTKYGDGAADIAPIFGLNKRQGRQLLAYLGAPKQLYEKTPTADLEDDKPQLPDEDALGVTYEAIDNYLEGKPVTPEEQKVIENHYIRNAHKRELAYTRYTWPKS.

47–54 (GISGGQDS) provides a ligand contact to ATP. D53 lines the Mg(2+) pocket. R139 is a deamido-NAD(+) binding site. T159 serves as a coordination point for ATP. Residue E164 coordinates Mg(2+). Deamido-NAD(+) contacts are provided by K172 and D179. Residues K188 and T210 each coordinate ATP. 259 to 260 (HK) contributes to the deamido-NAD(+) binding site.

The protein belongs to the NAD synthetase family. Homodimer.

The enzyme catalyses deamido-NAD(+) + NH4(+) + ATP = AMP + diphosphate + NAD(+) + H(+). The protein operates within cofactor biosynthesis; NAD(+) biosynthesis; NAD(+) from deamido-NAD(+) (ammonia route): step 1/1. In terms of biological role, catalyzes the ATP-dependent amidation of deamido-NAD to form NAD. Uses ammonia as a nitrogen source. The sequence is that of NH(3)-dependent NAD(+) synthetase from Staphylococcus aureus (strain MRSA252).